Reading from the N-terminus, the 60-residue chain is ETESTPDYLKNIQQQLEEYTKNFNTQVQNAFDSDKIKSEVNNFIESLGKILNTEKKEAPK.

As to expression, hemolymph.

The protein resides in the secreted. Its function is as follows. Antimicrobial protein. Has antibacterial activity against the Gram-positive bacteria M.luteus (MIC=86.6 uM), L.monocytogenes (MIC=86.6 uM), and S.lutea (MIC=86.6 uM). Lacks antibacterial activity against the Gram-positive bacteria B.circulans and S.aureus, and the Gram-negative bacteria E.coli D31, E.coli ATCC 25922, and S.typhimurium. Has antifungal activity against P.pastoris (MIC=86.6 uM) and P.stipitis (MIC=90.9 uM), but lacks antifungal activity against A.niger, C.albicans, C.albidus, C.fructus, C.wickerhamii, F.oxysporum, S.cerevisiae, S.pombe, T.harzianum, and Z.marxianus. In Galleria mellonella (Greater wax moth), this protein is Anionic antimicrobial peptide 2.